Reading from the N-terminus, the 270-residue chain is Energy-coupling factor transporter ATP-binding protein EcfA (270 aa).

Residues V5 to A238 form the ABC transporter domain. G38–S45 is a binding site for ATP.

This sequence belongs to the ABC transporter superfamily. Energy-coupling factor EcfA family. As to quaternary structure, forms a stable energy-coupling factor (ECF) transporter complex composed of 2 membrane-embedded substrate-binding proteins (S component), 2 ATP-binding proteins (A component) and 2 transmembrane proteins (T component).

Its subcellular location is the cell membrane. Functionally, ATP-binding (A) component of a common energy-coupling factor (ECF) ABC-transporter complex. Unlike classic ABC transporters this ECF transporter provides the energy necessary to transport a number of different substrates. This is Energy-coupling factor transporter ATP-binding protein EcfA from Carboxydothermus hydrogenoformans (strain ATCC BAA-161 / DSM 6008 / Z-2901).